Consider the following 212-residue polypeptide: Pyridoxine/pyridoxamine 5'-phosphate oxidase (212 aa).

Residues 57 to 62 (RMVLLK), 72 to 73 (YT), R78, K79, and Q101 each bind FMN. Substrate is bound at residue K62. 3 residues coordinate substrate: Y119, R123, and S127. Residues 136 to 137 (QS) and W181 each bind FMN. Residue 187–189 (RLH) coordinates substrate. R191 contributes to the FMN binding site.

Belongs to the pyridoxamine 5'-phosphate oxidase family. Homodimer. FMN serves as cofactor.

It carries out the reaction pyridoxamine 5'-phosphate + O2 + H2O = pyridoxal 5'-phosphate + H2O2 + NH4(+). The enzyme catalyses pyridoxine 5'-phosphate + O2 = pyridoxal 5'-phosphate + H2O2. It participates in cofactor metabolism; pyridoxal 5'-phosphate salvage; pyridoxal 5'-phosphate from pyridoxamine 5'-phosphate: step 1/1. Its pathway is cofactor metabolism; pyridoxal 5'-phosphate salvage; pyridoxal 5'-phosphate from pyridoxine 5'-phosphate: step 1/1. Its function is as follows. Catalyzes the oxidation of either pyridoxine 5'-phosphate (PNP) or pyridoxamine 5'-phosphate (PMP) into pyridoxal 5'-phosphate (PLP). The protein is Pyridoxine/pyridoxamine 5'-phosphate oxidase of Erythrobacter litoralis (strain HTCC2594).